A 387-amino-acid polypeptide reads, in one-letter code: Succinate--CoA ligase [ADP-forming] subunit beta (387 aa).

In terms of domain architecture, ATP-grasp spans 9–244; sequence KRLLAEEGVP…STQQDGREIT (236 aa). ATP-binding positions include lysine 46, 53-55, glutamate 99, serine 102, and glutamate 107; that span reads GRG. Residues asparagine 199 and aspartate 213 each coordinate Mg(2+). Substrate is bound by residues asparagine 264 and 321-323; that span reads GIT.

Belongs to the succinate/malate CoA ligase beta subunit family. Heterotetramer of two alpha and two beta subunits. It depends on Mg(2+) as a cofactor.

The catalysed reaction is succinate + ATP + CoA = succinyl-CoA + ADP + phosphate. It carries out the reaction GTP + succinate + CoA = succinyl-CoA + GDP + phosphate. Its pathway is carbohydrate metabolism; tricarboxylic acid cycle; succinate from succinyl-CoA (ligase route): step 1/1. Its function is as follows. Succinyl-CoA synthetase functions in the citric acid cycle (TCA), coupling the hydrolysis of succinyl-CoA to the synthesis of either ATP or GTP and thus represents the only step of substrate-level phosphorylation in the TCA. The beta subunit provides nucleotide specificity of the enzyme and binds the substrate succinate, while the binding sites for coenzyme A and phosphate are found in the alpha subunit. This Acidithiobacillus ferrooxidans (strain ATCC 23270 / DSM 14882 / CIP 104768 / NCIMB 8455) (Ferrobacillus ferrooxidans (strain ATCC 23270)) protein is Succinate--CoA ligase [ADP-forming] subunit beta.